The following is a 577-amino-acid chain: 9-cis-epoxycarotenoid dioxygenase NCED6, chloroplastic (577 aa).

The interval 1–25 is disordered; the sequence is MQHSLRSDLLPTKTSPRSHLLPQPK. Histidine 276, histidine 325, histidine 390, and histidine 563 together coordinate Fe cation.

Belongs to the carotenoid oxygenase family. The cofactor is Fe(2+). In terms of tissue distribution, expressed before fertilization in male and female gametophytes, and then immediately after pollination, restricted to seed endosperm.

The protein localises to the plastid. The protein resides in the chloroplast stroma. The catalysed reaction is a 9-cis-epoxycarotenoid + O2 = a 12'-apo-carotenal + 2-cis,4-trans-xanthoxin. It carries out the reaction 9-cis-violaxanthin + O2 = (3S,5R,6S)-5,6-epoxy-3-hydroxy-5,6-dihydro-12'-apo-beta-caroten-12'-al + 2-cis,4-trans-xanthoxin. It catalyses the reaction 9'-cis-neoxanthin + O2 = (3S,5R,6R)-3,5-dihydroxy-6,7-didehydro-5,6-dihydro-12'-apo-beta-caroten-12'-al + 2-cis,4-trans-xanthoxin. Functionally, has a 11,12(11',12') 9-cis epoxycarotenoid cleavage activity. Catalyzes the first step of abscisic-acid biosynthesis from carotenoids. Contributes probably to abscisic acid synthesis for the induction of seed dormancy. The protein is 9-cis-epoxycarotenoid dioxygenase NCED6, chloroplastic (NCED6) of Arabidopsis thaliana (Mouse-ear cress).